A 99-amino-acid chain; its full sequence is Large ribosomal subunit protein uL23 (99 aa).

The protein belongs to the universal ribosomal protein uL23 family. Part of the 50S ribosomal subunit. Contacts protein L29, and trigger factor when it is bound to the ribosome.

Functionally, one of the early assembly proteins it binds 23S rRNA. One of the proteins that surrounds the polypeptide exit tunnel on the outside of the ribosome. Forms the main docking site for trigger factor binding to the ribosome. The protein is Large ribosomal subunit protein uL23 of Pseudomonas entomophila (strain L48).